The chain runs to 209 residues: Probable GTP-binding protein EngB (209 aa).

The EngB-type G domain maps to 23–198 (NGAEIAFAGR…EKVVAGWLVP (176 aa)). Residues 31–38 (GRSNAGKS), 58–62 (GRTQL), 76–79 (DLPG), 143–146 (TKSD), and 177–179 (FSS) each bind GTP. Residues Ser-38 and Thr-60 each coordinate Mg(2+).

It belongs to the TRAFAC class TrmE-Era-EngA-EngB-Septin-like GTPase superfamily. EngB GTPase family. It depends on Mg(2+) as a cofactor.

In terms of biological role, necessary for normal cell division and for the maintenance of normal septation. This Azoarcus sp. (strain BH72) protein is Probable GTP-binding protein EngB.